The following is a 108-amino-acid chain: uncharacterized protein (108 aa).

The chain crosses the membrane as a helical span at residues 25 to 45 (VILKSFLLISSWVILVLLLVI).

The protein resides in the membrane. This is an uncharacterized protein from Saccharomyces cerevisiae (strain ATCC 204508 / S288c) (Baker's yeast).